Consider the following 97-residue polypeptide: uncharacterized protein (97 aa).

This is an uncharacterized protein from Schizosaccharomyces pombe (strain 972 / ATCC 24843) (Fission yeast).